Reading from the N-terminus, the 163-residue chain is MLNHFNFKLKRDVTIIVPGEAFVSNDRVISTILGSCVSVVLYDGVRRLIGVNHYVLVKSDSVVDVLQKGRYGVYAIPMLIDAMIENGASKSNLKAKLFGGANFMAKGTIRVGVENSEFAVNSLTKYGIPVVAQDFDQSKSRKIFVFPENFKVVVEYPDGAKIF.

The protein belongs to the CheD family.

The catalysed reaction is L-glutaminyl-[protein] + H2O = L-glutamyl-[protein] + NH4(+). Probably deamidates glutamine residues to glutamate on methyl-accepting chemotaxis receptors (MCPs), playing an important role in chemotaxis. The sequence is that of Probable chemoreceptor glutamine deamidase CheD from Borrelia turicatae (strain 91E135).